The sequence spans 57 residues: uncharacterized protein (57 aa).

The N-terminal stretch at 1–20 (MKKLALILFMGTLVSFYADA) is a signal peptide.

This is an uncharacterized protein from Escherichia coli (strain K12).